Consider the following 666-residue polypeptide: Mitogen-activated protein kinase kinase kinase ANP1 (666 aa).

One can recognise a Protein kinase domain in the interval 69-331 (WRKGQLIGRG…ASELLKHPFV (263 aa)). Residues 75–83 (IGRGAFGTV) and Lys-98 contribute to the ATP site. The stretch at 101–131 (LIAANFASKEKTQAHIQELEEEVKLLKNLSH) forms a coiled coil. Residues Lys-109 and Lys-111 each participate in a glycyl lysine isopeptide (Lys-Gly) (interchain with G-Cter in ubiquitin) cross-link. Catalysis depends on Asp-197, which acts as the Proton acceptor. Residues 452-464 (KFDESPGNGEKES) show a composition bias toward basic and acidic residues. Disordered regions lie at residues 452–481 (KFDE…DDDE), 536–592 (GFLK…DGVS), and 635–666 (QEIM…SPGK). Residues 538–558 (LKLPPKSRSPSRGPLGGSPSR) show a composition bias toward low complexity. Over residues 560 to 569 (TDATSCSKSP) the composition is skewed to polar residues. Residues 620–643 (KKWKEELDQELERKRQEIMRQAGL) are a coiled coil. The segment covering 647–660 (PRDRGMSRQREKSR) has biased composition (basic and acidic residues).

It belongs to the protein kinase superfamily. STE Ser/Thr protein kinase family. MAP kinase kinase kinase subfamily. As to expression, expressed in roots, inflorescence stems, flower buds and flowers. Low amount in rosette and cauline leaves.

It catalyses the reaction L-seryl-[protein] + ATP = O-phospho-L-seryl-[protein] + ADP + H(+). It carries out the reaction L-threonyl-[protein] + ATP = O-phospho-L-threonyl-[protein] + ADP + H(+). In terms of biological role, may be involved in an oxidative stress-mediated signaling cascade that phosphorylates downstream MAP kinases MPK3 and MPK6. May suppress auxin signaling that promotes cell cycle. Functionally redundant to ANP2 and ANP3 in the positive regulation of cytokinesis. The polypeptide is Mitogen-activated protein kinase kinase kinase ANP1 (ANP1) (Arabidopsis thaliana (Mouse-ear cress)).